Consider the following 349-residue polypeptide: tRNA pseudouridine synthase D (349 aa).

F27 serves as a coordination point for substrate. Residue D80 is the Nucleophile of the active site. N129 contacts substrate. The TRUD domain maps to 155 to 303 (GVPNYFGAQR…VEASRRAMLL (149 aa)). A substrate-binding site is contributed by F329.

Belongs to the pseudouridine synthase TruD family.

The catalysed reaction is uridine(13) in tRNA = pseudouridine(13) in tRNA. Its function is as follows. Responsible for synthesis of pseudouridine from uracil-13 in transfer RNAs. This Salmonella newport (strain SL254) protein is tRNA pseudouridine synthase D.